The chain runs to 284 residues: Bifunctional protein FolD (284 aa).

NADP(+) contacts are provided by residues 165–167 (GRS), S190, and I231.

This sequence belongs to the tetrahydrofolate dehydrogenase/cyclohydrolase family. Homodimer.

The enzyme catalyses (6R)-5,10-methylene-5,6,7,8-tetrahydrofolate + NADP(+) = (6R)-5,10-methenyltetrahydrofolate + NADPH. It catalyses the reaction (6R)-5,10-methenyltetrahydrofolate + H2O = (6R)-10-formyltetrahydrofolate + H(+). Its pathway is one-carbon metabolism; tetrahydrofolate interconversion. Catalyzes the oxidation of 5,10-methylenetetrahydrofolate to 5,10-methenyltetrahydrofolate and then the hydrolysis of 5,10-methenyltetrahydrofolate to 10-formyltetrahydrofolate. The sequence is that of Bifunctional protein FolD from Streptococcus thermophilus (strain CNRZ 1066).